The following is a 181-amino-acid chain: Mitochondrial pyruvate carrier-like protein (181 aa).

The next 2 helical transmembrane spans lie at 23-42 (YLAS…PLAA) and 52-74 (IISG…FAYR). The interval 125–154 (TGSVDSSATSTGSVDSSATSTGSVDSSAAT) is disordered.

The protein belongs to the mitochondrial pyruvate carrier (MPC) (TC 2.A.105) family.

Its subcellular location is the mitochondrion inner membrane. In terms of biological role, may mediate the uptake of pyruvate into mitochondria. The polypeptide is Mitochondrial pyruvate carrier-like protein (Bos taurus (Bovine)).